The primary structure comprises 169 residues: Chorismate pyruvate-lyase (169 aa).

Positions 37, 79, 117, and 158 each coordinate substrate.

Belongs to the UbiC family. As to quaternary structure, monomer.

The protein localises to the cytoplasm. It carries out the reaction chorismate = 4-hydroxybenzoate + pyruvate. Its pathway is cofactor biosynthesis; ubiquinone biosynthesis. Its function is as follows. Removes the pyruvyl group from chorismate, with concomitant aromatization of the ring, to provide 4-hydroxybenzoate (4HB) for the ubiquinone pathway. This chain is Chorismate pyruvate-lyase, found in Proteus mirabilis (strain HI4320).